Consider the following 199-residue polypeptide: uncharacterized protein (199 aa).

This is an uncharacterized protein from Rattus norvegicus (Rat).